The primary structure comprises 32 residues: Enolase (32 aa).

It belongs to the enolase family. As to quaternary structure, homodimer. The cofactor is Mg(2+).

It is found in the cytoplasm. The catalysed reaction is (2R)-2-phosphoglycerate = phosphoenolpyruvate + H2O. Its pathway is carbohydrate degradation; glycolysis; pyruvate from D-glyceraldehyde 3-phosphate: step 4/5. The protein is Enolase of Imperata cylindrica (Cogon grass).